The following is a 476-amino-acid chain: Ribulose bisphosphate carboxylase large chain (476 aa).

Positions 1–2 (MS) are excised as a propeptide. P3 bears the N-acetylproline mark. K14 bears the N6,N6,N6-trimethyllysine mark. Residues N123 and T173 each contribute to the substrate site. The active-site Proton acceptor is K175. K177 is a substrate binding site. The Mg(2+) site is built by K201, D203, and E204. The residue at position 201 (K201) is an N6-carboxylysine. H294 acts as the Proton acceptor in catalysis. The substrate site is built by R295, H327, and S379.

This sequence belongs to the RuBisCO large chain family. Type I subfamily. In terms of assembly, heterohexadecamer of 8 large chains and 8 small chains; disulfide-linked. The disulfide link is formed within the large subunit homodimers. Mg(2+) serves as cofactor. The disulfide bond which can form in the large chain dimeric partners within the hexadecamer appears to be associated with oxidative stress and protein turnover.

The protein resides in the plastid. It localises to the chloroplast. It carries out the reaction 2 (2R)-3-phosphoglycerate + 2 H(+) = D-ribulose 1,5-bisphosphate + CO2 + H2O. The enzyme catalyses D-ribulose 1,5-bisphosphate + O2 = 2-phosphoglycolate + (2R)-3-phosphoglycerate + 2 H(+). Functionally, ruBisCO catalyzes two reactions: the carboxylation of D-ribulose 1,5-bisphosphate, the primary event in carbon dioxide fixation, as well as the oxidative fragmentation of the pentose substrate in the photorespiration process. Both reactions occur simultaneously and in competition at the same active site. The polypeptide is Ribulose bisphosphate carboxylase large chain (Arenaria drummondii (Drummond sandwort)).